Reading from the N-terminus, the 559-residue chain is Polypeptide N-acetylgalactosaminyltransferase 1 (559 aa).

Topologically, residues 1-8 are cytoplasmic; it reads MRKFAYCK. The chain crosses the membrane as a helical; Signal-anchor for type II membrane protein span at residues 9 to 28; the sequence is VVLATSLVWVLLDMFLLLYF. The Lumenal segment spans residues 29 to 559; the sequence is SECNKCEEKK…LRNVTLPEIF (531 aa). Asparagine 95 carries an N-linked (GlcNAc...) asparagine glycan. 5 cysteine pairs are disulfide-bonded: cysteine 106-cysteine 339, cysteine 330-cysteine 408, cysteine 442-cysteine 459, cysteine 482-cysteine 497, and cysteine 523-cysteine 540. A catalytic subdomain A region spans residues 115-225; that stretch reads LPTTSVVIVF…VGWLEPLLAR (111 aa). The substrate site is built by aspartate 156 and arginine 186. The Mn(2+) site is built by aspartate 209 and histidine 211. A catalytic subdomain B region spans residues 285–347; that stretch reads PVRTPTMAGG…TCSHVGHVFR (63 aa). Tryptophan 316 is a substrate binding site. Histidine 344 serves as a coordination point for Mn(2+). Positions 347 and 352 each coordinate substrate. The Ricin B-type lectin domain maps to 429–551; sequence FSLGEIRNVE…GSRSQQWLLR (123 aa). Asparagine 552 carries N-linked (GlcNAc...) asparagine glycosylation.

It belongs to the glycosyltransferase 2 family. GalNAc-T subfamily. It depends on Mn(2+) as a cofactor. In terms of tissue distribution, heart, brain, spleen, liver, skeletal muscle and kidney.

It is found in the golgi apparatus. The protein resides in the golgi stack membrane. The protein localises to the secreted. The catalysed reaction is L-seryl-[protein] + UDP-N-acetyl-alpha-D-galactosamine = a 3-O-[N-acetyl-alpha-D-galactosaminyl]-L-seryl-[protein] + UDP + H(+). It catalyses the reaction L-threonyl-[protein] + UDP-N-acetyl-alpha-D-galactosamine = a 3-O-[N-acetyl-alpha-D-galactosaminyl]-L-threonyl-[protein] + UDP + H(+). It participates in protein modification; protein glycosylation. Its function is as follows. Catalyzes the initial reaction in O-linked oligosaccharide biosynthesis, the transfer of an N-acetyl-D-galactosamine residue to a serine or threonine residue on the protein receptor. Has a broad spectrum of substrates such as apomucin-, MUC5AC-, MUC1- and MUC2-derived peptides. The polypeptide is Polypeptide N-acetylgalactosaminyltransferase 1 (Rattus norvegicus (Rat)).